The following is a 583-amino-acid chain: ATP-dependent lipid A-core flippase (583 aa).

6 helical membrane-spanning segments follow: residues 32–52 (VAFL…TGFL), 71–91 (LHLL…AGFI), 115–135 (LMSL…TSKL), 160–180 (ILGM…IFAV), 259–279 (SMVV…YAVG), and 286–306 (FAAF…LTSL). Positions 34–312 (FLISIIALVT…LTSLNEELQV (279 aa)) constitute an ABC transmembrane type-1 domain. Residues 344-580 (IVFENVTLQY…DGHYAKLYRK (237 aa)) enclose the ABC transporter domain. Position 378–385 (378–385 (GRSGGGKT)) interacts with ATP.

The protein belongs to the ABC transporter superfamily. Lipid exporter (TC 3.A.1.106) family. As to quaternary structure, homodimer.

The protein localises to the cell inner membrane. The catalysed reaction is ATP + H2O + lipid A-core oligosaccharideSide 1 = ADP + phosphate + lipid A-core oligosaccharideSide 2.. Involved in lipopolysaccharide (LPS) biosynthesis. Translocates lipid A-core from the inner to the outer leaflet of the inner membrane. Transmembrane domains (TMD) form a pore in the inner membrane and the ATP-binding domain (NBD) is responsible for energy generation. The polypeptide is ATP-dependent lipid A-core flippase (Methylobacillus flagellatus (strain ATCC 51484 / DSM 6875 / VKM B-1610 / KT)).